Reading from the N-terminus, the 520-residue chain is Putative transporter svop-1 (520 aa).

At 1–85 the chain is on the cytoplasmic side; sequence MGDKAILTEV…LGFGRFQLKL (85 aa). The chain crosses the membrane as a helical span at residues 86-106; sequence SILTGMAWMADAMEMMLLSLI. The Extracellular portion of the chain corresponds to 107-120; it reads SPALACEWGISSVQ. Residues 121–141 form a helical membrane-spanning segment; the sequence is QALVTTCVFSGMMLSSTFWGK. The Cytoplasmic portion of the chain corresponds to 142–157; that stretch reads ICDRFGRRKGLTFSTL. The chain crosses the membrane as a helical span at residues 158-178; that stretch reads VACIMGVISGMSPHFYVLLFF. A topological domain (extracellular) is located at residue Arg-179. Residues 180-200 traverse the membrane as a helical segment; that stretch reads GLTGFGIGGVPQSVTLYAEFL. Over 201–208 the chain is Cytoplasmic; sequence PTAQRAKC. Residues 209–229 form a helical membrane-spanning segment; sequence VVLIESFWAIGAVFEALLAYF. At 230–237 the chain is on the extracellular side; sequence VMESFGWR. The helical transmembrane segment at 238 to 258 threads the bilayer; the sequence is ALMFLSSLPLGIFAVASFWLP. The Cytoplasmic segment spans residues 259–319; it reads ESARFDMASG…LLSPDLRKTT (61 aa). Residues 320 to 340 form a helical membrane-spanning segment; sequence ILLWCIWAITAFSYYGMVLFT. At 341-372 the chain is on the extracellular side; it reads TVLFQSHDECHGGLFSNGTQMEVCQPLTRSDY. A helical membrane pass occupies residues 373-393; sequence FDLLSTTLAEFPGLIITVLII. Topologically, residues 394 to 410 are cytoplasmic; it reads EWFGRKKTMALEYAVFA. A helical membrane pass occupies residues 411–431; sequence IFTFLLYFCLDRFTVTVLIFV. The Extracellular portion of the chain corresponds to 432–434; it reads ARA. The helical transmembrane segment at 435–455 threads the bilayer; that stretch reads FISGAFQCAYVYTPEVYPTTL. The Cytoplasmic segment spans residues 456-461; that stretch reads RAVGLG. A helical membrane pass occupies residues 462 to 487; sequence TCSAMARIGAIVTPFIAQVASEKSLS. Residues 488–489 are Extracellular-facing; it reads LP. The helical transmembrane segment at 490–509 threads the bilayer; the sequence is IGIYGTAAILGLIASLSLPI. The Cytoplasmic portion of the chain corresponds to 510 to 520; that stretch reads ETKGRQMMDSH.

Belongs to the major facilitator superfamily.

It localises to the membrane. The chain is Putative transporter svop-1 from Caenorhabditis elegans.